A 1177-amino-acid chain; its full sequence is Lysylphosphatidylglycerol biosynthesis bifunctional protein LysX (1177 aa).

2 disordered regions span residues 1-40 (MRRA…AKFV) and 61-85 (VTLA…PANR). Residues 1 to 676 (MRRAGRSRQF…LLHHDGSAPD (676 aa)) form a phosphatidylglycerol lysyltransferase region. Polar residues predominate over residues 8–21 (RQFSSVEEAFSTSA). Low complexity predominate over residues 65 to 82 (SPGSRSGSGPRSGPRLGP). Helical transmembrane passes span 93–113 (VPAA…LGSV), 135–155 (FPDT…ALTA), 159–179 (IAWL…VADI), 189–209 (IFGE…LVLA), 227–247 (AVLV…VELF), and 281–301 (VFLN…ATIV). The segment at 673 to 693 (SAPDVSGLRPERTDAEEARSR) is disordered. A lysine--tRNA ligase region spans residues 677 to 1177 (VSGLRPERTD…TLPFPLAKPH (501 aa)). Basic and acidic residues predominate over residues 681-693 (RPERTDAEEARSR). Mg(2+) contacts are provided by Asp1089 and Glu1096.

The protein in the N-terminal section; belongs to the LPG synthetase family. This sequence in the C-terminal section; belongs to the class-II aminoacyl-tRNA synthetase family. Requires Mg(2+) as cofactor.

It localises to the cell membrane. It catalyses the reaction tRNA(Lys) + L-lysine + ATP = L-lysyl-tRNA(Lys) + AMP + diphosphate. It carries out the reaction L-lysyl-tRNA(Lys) + a 1,2-diacyl-sn-glycero-3-phospho-(1'-sn-glycerol) = a 1,2-diacyl-sn-glycero-3-phospho-1'-(3'-O-L-lysyl)-sn-glycerol + tRNA(Lys). In terms of biological role, catalyzes the production of L-lysyl-tRNA(Lys)transfer and the transfer of a lysyl group from L-lysyl-tRNA(Lys) to membrane-bound phosphatidylglycerol (PG), which produces lysylphosphatidylglycerol (LPG), one of the components of the bacterial membrane with a positive net charge. LPG synthesis contributes to the resistance to cationic antimicrobial peptides (CAMPs) and likely protects M.tuberculosis against the CAMPs produced by competiting microorganisms (bacteriocins). In fact, the modification of anionic phosphatidylglycerol with positively charged L-lysine results in repulsion of the peptides. The polypeptide is Lysylphosphatidylglycerol biosynthesis bifunctional protein LysX (lysX) (Mycobacterium avium (strain 104)).